A 149-amino-acid polypeptide reads, in one-letter code: Large ribosomal subunit protein eL24A (149 aa).

2 stretches are compositionally biased toward basic and acidic residues: residues 93 to 102 (KRNQRPEVRA) and 116 to 125 (KAASESEKKA). The tract at residues 93-149 (KRNQRPEVRAAARAAALKQRKDKKAASESEKKAIKAKSAASSARGQAIKNAKAAARH) is disordered.

It belongs to the eukaryotic ribosomal protein eL24 family. As to quaternary structure, component of the large ribosomal subunit (LSU). Mature yeast ribosomes consist of a small (40S) and a large (60S) subunit. The 40S small subunit contains 1 molecule of ribosomal RNA (18S rRNA) and at least 33 different proteins. The large 60S subunit contains 3 rRNA molecules (25S, 5.8S and 5S rRNA) and at least 46 different proteins.

It localises to the cytoplasm. Component of the ribosome, a large ribonucleoprotein complex responsible for the synthesis of proteins in the cell. The small ribosomal subunit (SSU) binds messenger RNAs (mRNAs) and translates the encoded message by selecting cognate aminoacyl-transfer RNA (tRNA) molecules. The large subunit (LSU) contains the ribosomal catalytic site termed the peptidyl transferase center (PTC), which catalyzes the formation of peptide bonds, thereby polymerizing the amino acids delivered by tRNAs into a polypeptide chain. The nascent polypeptides leave the ribosome through a tunnel in the LSU and interact with protein factors that function in enzymatic processing, targeting, and the membrane insertion of nascent chains at the exit of the ribosomal tunnel. The protein is Large ribosomal subunit protein eL24A (rpl2401) of Schizosaccharomyces pombe (strain 972 / ATCC 24843) (Fission yeast).